A 104-amino-acid chain; its full sequence is Translation initiation factor 1A (104 aa).

Residues 1 to 14 (MRGQQTPPQQPTRV) are compositionally biased toward low complexity. Residues 1 to 20 (MRGQQTPPQQPTRVRTPREN) form a disordered region. The 76-residue stretch at 12–87 (TRVRTPRENE…EKCDVIWRYT (76 aa)) folds into the S1-like domain.

The protein belongs to the eIF-1A family.

Functionally, seems to be required for maximal rate of protein biosynthesis. Enhances ribosome dissociation into subunits and stabilizes the binding of the initiator Met-tRNA(I) to 40 S ribosomal subunits. The chain is Translation initiation factor 1A from Methanococcus maripaludis (strain DSM 14266 / JCM 13030 / NBRC 101832 / S2 / LL).